The primary structure comprises 396 residues: Vacuolar protease A (396 aa).

The signal sequence occupies residues methionine 1–alanine 17. Positions glycine 18–serine 70 are cleaved as a propeptide — activation peptide. Positions tyrosine 85–alanine 392 constitute a Peptidase A1 domain. Aspartate 103 is an active-site residue. A disulfide bridge connects residues cysteine 116 and cysteine 121. A glycan (N-linked (GlcNAc...) asparagine) is linked at asparagine 138. The active site involves aspartate 284. The cysteines at positions 318 and 351 are disulfide-linked. N-linked (GlcNAc...) asparagine glycosylation is present at asparagine 335.

The protein belongs to the peptidase A1 family.

The protein resides in the vacuole. The chain is Vacuolar protease A (pep-4) from Neurospora crassa (strain ATCC 24698 / 74-OR23-1A / CBS 708.71 / DSM 1257 / FGSC 987).